The chain runs to 904 residues: E3 ubiquitin-protein ligase ZNF598 (904 aa).

The segment at cysteine 29–arginine 69 adopts an RING-type zinc-finger fold. The segment at proline 187 to histidine 210 adopts a C2H2-type zinc-finger fold. Tyrosine 306 carries the post-translational modification Phosphotyrosine. 2 disordered regions span residues tyrosine 312–leucine 469 and valine 490–proline 656. Residues alanine 346–glutamine 358 show a composition bias toward low complexity. A compositionally biased stretch (basic and acidic residues) spans glutamate 359 to glycine 388. The segment covering glutamate 404–phenylalanine 416 has biased composition (polar residues). Residues valine 418–glycine 431 are compositionally biased toward low complexity. Residues glycine 428, glycine 431, and serine 437 each carry the phosphoserine modification. Low complexity-rich tracts occupy residues serine 447–threonine 461 and serine 502–serine 513. Residues leucine 521–proline 531 show a composition bias toward polar residues. Residues lysine 534–arginine 543 show a composition bias toward basic residues. Residues leucine 564–proline 584 are compositionally biased toward polar residues.

This sequence belongs to the ZNF598/HEL2 family. In terms of assembly, interacts with the E2 ubiquitin-conjugating enzyme UBE2D3. Component of the 4EHP-GYF2 complex, at least composed of EIF4E2, GIGYF2 and ZNF598.

The protein localises to the cytoplasm. It is found in the cytosol. It catalyses the reaction S-ubiquitinyl-[E2 ubiquitin-conjugating enzyme]-L-cysteine + [acceptor protein]-L-lysine = [E2 ubiquitin-conjugating enzyme]-L-cysteine + N(6)-ubiquitinyl-[acceptor protein]-L-lysine.. It functions in the pathway protein modification; protein ubiquitination. In terms of biological role, E3 ubiquitin-protein ligase that plays a key role in the ribosome quality control (RQC), a pathway that takes place when a ribosome has stalled during translation, leading to degradation of nascent peptide chains. ZNF598 is activated when ribosomes are stalled within an mRNA following translation of prematurely polyadenylated mRNAs. Acts as a ribosome collision sensor: specifically recognizes and binds collided di-ribosome, which arises when a trailing ribosome encounters a slower leading ribosome, leading to terminally arrest translation. Following binding to colliding ribosomes, mediates monoubiquitination of 40S ribosomal proteins RPS10/eS10 and RPS3/uS3, and 'Lys-63'-linked polyubiquitination of RPS20/uS10. Polyubiquitination of RPS20/uS10 promotes recruitment of the RQT (ribosome quality control trigger) complex, which drives the disassembly of stalled ribosomes, followed by degradation of nascent peptides. E3 ubiquitin-protein ligase activity is dependent on the E2 ubiquitin-conjugating enzyme UBE2D3. Also acts as an adapter that recruits the 4EHP-GYF2 complex to mRNAs. Independently of its role in RQC, may also act as a negative regulator of interferon-stimulated gene (ISG) expression. Its function is as follows. (Microbial infection) Required for poxvirus protein synthesis by mediating ubiquitination of RPS10/eS10 and RPS20/uS10. Poxvirus encoding mRNAs contain unusual 5' poly(A) leaders and ZNF598 is required for their translational efficiency, possibly via its ability to suppress readthrough or sliding on shorter poly(A) tracts. This is E3 ubiquitin-protein ligase ZNF598 from Homo sapiens (Human).